A 171-amino-acid polypeptide reads, in one-letter code: MSNSSLALKQSGLRWLWLALLVFIADITIKLIVMDNMGYGWANRIEVLPFFNLLYVHNYGAAFSFLSDQEGWQRWLFTGIAFVVTGMLAYWMRRLPASDKWNNIAYALIIGGAVGNVFDRIVHGFVVDYLDFYWGTYHWPAFNLADSTICIGAAMIILDGFRAKKSAPSQS.

4 consecutive transmembrane segments (helical) span residues 15–35 (WLWL…IVMD), 47–67 (VLPF…SFLS), 72–92 (WQRW…AYWM), and 107–127 (ALII…GFVV). Catalysis depends on residues Asp128 and Asp146. Residues 141–161 (AFNLADSTICIGAAMIILDGF) form a helical membrane-spanning segment.

Belongs to the peptidase A8 family.

It localises to the cell inner membrane. The catalysed reaction is Release of signal peptides from bacterial membrane prolipoproteins. Hydrolyzes -Xaa-Yaa-Zaa-|-(S,diacylglyceryl)Cys-, in which Xaa is hydrophobic (preferably Leu), and Yaa (Ala or Ser) and Zaa (Gly or Ala) have small, neutral side chains.. It participates in protein modification; lipoprotein biosynthesis (signal peptide cleavage). Its function is as follows. This protein specifically catalyzes the removal of signal peptides from prolipoproteins. In Vibrio cholerae serotype O1 (strain ATCC 39315 / El Tor Inaba N16961), this protein is Lipoprotein signal peptidase.